Consider the following 365-residue polypeptide: Sulfotransferase 2B1 (365 aa).

70 to 75 (KSGTTW) provides a ligand contact to 3'-phosphoadenylyl sulfate. Substrate contacts are provided by tryptophan 98, tryptophan 103, and histidine 125. The Proton acceptor role is filled by histidine 125. Residues arginine 147, serine 155, tyrosine 210, 244-249 (STFSAM), and 274-276 (RKG) contribute to the 3'-phosphoadenylyl sulfate site. The segment at 303–365 (GMPTFPWDED…ASETPHPRPS (63 aa)) is disordered. The span at 309–325 (WDEDPEEDGSPDPEPSP) shows a compositional bias: acidic residues. Residue serine 348 is modified to Phosphoserine.

This sequence belongs to the sulfotransferase 1 family. Phosphorylated. Expressed in the stratum granulosum-stratum corneum junction in the skin (at protein level). Expressed highly in placenta, prostate and trachea and lower expression in the small intestine and lung.

Its subcellular location is the cytoplasm. The protein localises to the cytosol. It localises to the microsome. The protein resides in the nucleus. It carries out the reaction an alcohol + 3'-phosphoadenylyl sulfate = an alkyl sulfate + adenosine 3',5'-bisphosphate + H(+). The catalysed reaction is 3beta-hydroxyandrost-5-en-17-one + 3'-phosphoadenylyl sulfate = dehydroepiandrosterone 3-sulfate + adenosine 3',5'-bisphosphate + H(+). It catalyses the reaction (24S)-hydroxycholesterol + 3'-phosphoadenylyl sulfate = (24S)-hydroxycholesterol 3-sulfate + adenosine 3',5'-bisphosphate + H(+). The enzyme catalyses cholesterol + 3'-phosphoadenylyl sulfate = cholesterol sulfate + adenosine 3',5'-bisphosphate + H(+). It carries out the reaction pregnenolone + 3'-phosphoadenylyl sulfate = pregnenolone sulfate + adenosine 3',5'-bisphosphate + H(+). Its function is as follows. Sulfotransferase that utilizes 3'-phospho-5'-adenylyl sulfate (PAPS) as sulfonate donor to catalyze the sulfate conjugation. Responsible for the sulfation of cholesterol. Catalyzes sulfation of the 3beta-hydroxyl groups of steroids, such as, pregnenolone and dehydroepiandrosterone (DHEA). Preferentially sulfonates cholesterol, while it also has significant activity with pregnenolone and DHEA. Plays a role in epidermal cholesterol metabolism and in the regulation of epidermal proliferation and differentiation. In terms of biological role, sulfonates pregnenolone but not cholesterol. The sequence is that of Sulfotransferase 2B1 (SULT2B1) from Homo sapiens (Human).